Consider the following 465-residue polypeptide: MQLDKKIINHVHCLGIGGIGVSALAEILLKKGCRVTGSDVSPNKNTERLQRLGAEIIFNHDGTAITQADCAVYSSAIGATNPELMAAKQAKIPLLKRGEMLANLMKEYQSIAVAGAHGKTTTSGMLSHAFVEANLDPTFMVGGVLNNSQTPARVGNGHYFIAEADESDASFLFMHPDIAVVTNIDADHLSTYDGDFNRLKQTYIQFLEQTAQDGVVVLCLDDPILREIAPLLSRRVITYGFSSDAQYRVVDYCQQGIQSLFQIHSPQRKAPLTVKLSMPGQHNALNATAVTAIADVVQMNEPALLKSLADFPGVDRRFTIRGEMILPKGNALIIEDYGHHPNEIKATLAAARAAWPERRMVLVFQPHRYSRTRDLMTEFVSVLAETDWLVLLEVYSAGEMPIPGADGMALIKMMSNGMAQKTTFVPLLQNLPETLQKLSQPNDIIILQGAGNIGSIVTALVQTHG.

Residue 115–121 participates in ATP binding; sequence GAHGKTT.

This sequence belongs to the MurCDEF family.

The protein resides in the cytoplasm. It catalyses the reaction UDP-N-acetyl-alpha-D-muramate + L-alanine + ATP = UDP-N-acetyl-alpha-D-muramoyl-L-alanine + ADP + phosphate + H(+). Its pathway is cell wall biogenesis; peptidoglycan biosynthesis. Functionally, cell wall formation. In Coxiella burnetii (strain Dugway 5J108-111), this protein is UDP-N-acetylmuramate--L-alanine ligase.